A 79-amino-acid chain; its full sequence is RNA-binding protein Hfq (79 aa).

The region spanning 9-69 (DTFLNHLRKE…ISTFTPQRPV (61 aa)) is the Sm domain.

The protein belongs to the Hfq family. Homohexamer.

Its function is as follows. RNA chaperone that binds small regulatory RNA (sRNAs) and mRNAs to facilitate mRNA translational regulation in response to envelope stress, environmental stress and changes in metabolite concentrations. Also binds with high specificity to tRNAs. In Brevibacillus brevis (strain 47 / JCM 6285 / NBRC 100599), this protein is RNA-binding protein Hfq.